Reading from the N-terminus, the 889-residue chain is Alanine--tRNA ligase (889 aa).

Zn(2+) is bound by residues H566, H570, C683, and H687.

This sequence belongs to the class-II aminoacyl-tRNA synthetase family. Requires Zn(2+) as cofactor.

The protein resides in the cytoplasm. It carries out the reaction tRNA(Ala) + L-alanine + ATP = L-alanyl-tRNA(Ala) + AMP + diphosphate. Catalyzes the attachment of alanine to tRNA(Ala) in a two-step reaction: alanine is first activated by ATP to form Ala-AMP and then transferred to the acceptor end of tRNA(Ala). Also edits incorrectly charged Ser-tRNA(Ala) and Gly-tRNA(Ala) via its editing domain. The protein is Alanine--tRNA ligase of Herpetosiphon aurantiacus (strain ATCC 23779 / DSM 785 / 114-95).